We begin with the raw amino-acid sequence, 582 residues long: MATSKGRNADPAAALRDCRAAFIGVGVASALVNLLYLTGSFFMLEVYDRILPSRSIPSLIALSLLALLLYAFQGAFELIRGRMLVRIAGALDESLNGRIYRAIVKAPLKLRMQGDGLQALRDFDQVRSFLSGVGPAALFDLPWLPFYIAICFLFHPVIGLIAIIGGLILTLLTYLTNRGTQAPAKKASEAGGLRNVFAQASQRNAEVVHAMGMSARLTALWERRNTEFRDENRRTSDIGNGYGALSKVFRMALQSGVLAAGAVLVIRGEASPGIIIAGSILTARALAPVELAIGNWRGLVAARQSWQRLKELLNALPEADAPLQLPDPHERLTVEGLASGPPAAQRLVVSDVNFTVRAGGAVGVIGPSASGKSSLARAILGIWPAYRGSVRLDGAALDQWDSDALGKHVGYLPQDVELFAGTIAQNICRFAEDATSEAIVAAAKAARVNDLILRLPNGYDTEIGDGGMTLSAGQRQRVALARALYGDPFLVVLDEPNSNLDAEGEQALSEAIMSVRSRGGIVIVVAHRPSALASVDLVLMMNEGRMQAFGPKEQVLGQVLRPQQVERQNALKVVAEGQEAKQ.

The next 3 membrane-spanning stretches (helical) occupy residues 22–42 (FIGV…GSFF), 59–79 (LIAL…FELI), and 148–168 (IAIC…GGLI). One can recognise an ABC transmembrane type-1 domain in the interval 22-301 (FIGVGVASAL…AIGNWRGLVA (280 aa)). Residues 332–568 (LTVEGLASGP…VLRPQQVERQ (237 aa)) form the ABC transporter domain. Position 366-373 (366-373 (GPSASGKS)) interacts with ATP.

It belongs to the ABC transporter superfamily. In terms of assembly, part of a type I secretion system composed of PrsD and PrsE.

Its subcellular location is the cell inner membrane. Functionally, mediates secretion of glycanase ExsH. The sequence is that of Type I secretion system ATP-binding protein PrsD (prsD) from Rhizobium meliloti (strain 1021) (Ensifer meliloti).